Reading from the N-terminus, the 461-residue chain is Coagulation factor IX (461 aa).

An N-terminal signal peptide occupies residues 1 to 28 (MQRVNMIMAESPGLITICLLGYLLSAEC). A propeptide spanning residues 29-46 (TVFLDHENANKILNRPKR) is cleaved from the precursor. Ca(2+)-binding residues include Y47, N48, E53, E54, E61, E63, E66, E67, E72, E73, and E76. A Gla domain is found at 47 to 92 (YNSGKLEEFVQGNLERECMEEKCSFEEAREVFENTERTTEFWKQYV). Residues E53, E54, E61, E63, E66, E67, E72, E73, E76, E79, and E82 each carry the 4-carboxyglutamate modification. Residue E61 participates in Mg(2+) binding. Residues C64 and C69 are joined by a disulfide bond. E66 serves as a coordination point for Mg(2+). Residue E72 participates in Mg(2+) binding. E76 is a Mg(2+) binding site. Residue E82 participates in Ca(2+) binding. Mg(2+) is bound at residue E82. O-linked (GalNAc...) threonine glycosylation is present at T85. Ca(2+) contacts are provided by E86, D93, G94, and Q96. E86 is subject to 4-carboxyglutamate. Mg(2+) is bound at residue E86. Positions 93–129 (DGDQCESNPCLNGGSCKDDINSYECWCPFGFEGKNCE) constitute an EGF-like 1; calcium-binding domain. Disulfide bonds link C97/C108, C102/C117, C119/C128, C134/C145, C141/C155, C157/C170, C178/C335, C252/C268, C382/C396, and C407/C435. An O-linked (Glc...) serine glycan is attached at S99. S107 is a glycosylation site (O-linked (Fuc...) serine). The Ca(2+) site is built by D110 and D111. D110 bears the (3R)-3-hydroxyaspartate mark. S114 carries the post-translational modification Phosphoserine. The 42-residue stretch at 130 to 171 (LDVTCNIKNGRCEQFCKNSADNKVVCSCTEGYRLAENQKSCE) folds into the EGF-like 2 domain. A propeptide spans 192–226 (AETVFPDVDYVNSTEAETILDNITQSTQSFNDFTR) (activation peptide). Sulfotyrosine is present on Y201. N-linked (GlcNAc...) asparagine glycosylation occurs at N203. S204 bears the Phosphoserine mark. T205 bears the Phosphothreonine; alternate mark. O-linked (GalNAc...) threonine; alternate glycosylation is present at T205. A glycan (N-linked (GlcNAc...) asparagine) is linked at N213. Residues T215 and T225 are each glycosylated (O-linked (GalNAc...) threonine). The region spanning 227–459 (VVGGEDAKPG…YVNWIKEKTK (233 aa)) is the Peptidase S1 domain. H267 acts as the Charge relay system in catalysis. Residues E281, N283, E286, E288, and E291 each coordinate Ca(2+). D315 (charge relay system) is an active-site residue. The active-site Charge relay system is S411.

This sequence belongs to the peptidase S1 family. Heterodimer of a light chain and a heavy chain; disulfide-linked. Interacts (inactive and activated) with F11 (activated) in calcium-dependent manner. Interacts with SERPINC1. Interacts (activated) with iripin-8, a serine protease inhibitor from Ixodes ricinus saliva. Interacts (inactive and activated) with nitrophorin-2, an anticoagulant protein from Rhodnius prolixus. Activated by factor XIa, which excises the activation peptide. The propeptide can also be removed by snake venom protease. Activated by coagulation factor VIIa-tissue factor (F7-F3) complex in calcium-dependent manner. Post-translationally, the iron and 2-oxoglutarate dependent 3-hydroxylation of aspartate and asparagine is (R) stereospecific within EGF domains. In terms of tissue distribution, detected in blood plasma (at protein level). Synthesized primarily in the liver and secreted in plasma.

It localises to the secreted. It catalyses the reaction Selective cleavage of Arg-|-Ile bond in factor X to form factor Xa.. Factor IX is a vitamin K-dependent plasma protein that participates in the intrinsic pathway of blood coagulation by converting factor X to its active form in the presence of Ca(2+) ions, phospholipids, and factor VIIIa. This chain is Coagulation factor IX (F9), found in Homo sapiens (Human).